A 637-amino-acid polypeptide reads, in one-letter code: DNA mismatch repair protein MutL (637 aa).

Positions 343–352 (QQSPDRQVSP) are enriched in polar residues. Residues 343-411 (QQSPDRQVSP…SARNGDVSLP (69 aa)) form a disordered region. Residues 365–380 (SIERKPSVSYDVRDSH) show a composition bias toward basic and acidic residues. Low complexity predominate over residues 388-397 (YSSGSSSYRS).

Belongs to the DNA mismatch repair MutL/HexB family.

In terms of biological role, this protein is involved in the repair of mismatches in DNA. It is required for dam-dependent methyl-directed DNA mismatch repair. May act as a 'molecular matchmaker', a protein that promotes the formation of a stable complex between two or more DNA-binding proteins in an ATP-dependent manner without itself being part of a final effector complex. The chain is DNA mismatch repair protein MutL from Shewanella halifaxensis (strain HAW-EB4).